We begin with the raw amino-acid sequence, 319 residues long: Lambda-crystallin homolog (319 aa).

N-acetylalanine is present on alanine 2. Phosphoserine is present on serine 3. NAD(+) is bound by residues 16–17 (LI), aspartate 36, glutamate 97, and lysine 102.

It belongs to the 3-hydroxyacyl-CoA dehydrogenase family. In terms of assembly, homodimer. Widely expressed, with highest levels in liver. Undetectable in skeletal muscle.

Its subcellular location is the cytoplasm. It carries out the reaction L-gulonate + NAD(+) = 3-dehydro-L-gulonate + NADH + H(+). Its activity is regulated as follows. Inhibited by malonate. Functionally, has high L-gulonate 3-dehydrogenase activity. It also exhibits low dehydrogenase activity toward L-3-hydroxybutyrate (HBA) and L-threonate. The chain is Lambda-crystallin homolog (Cryl1) from Mus musculus (Mouse).